Reading from the N-terminus, the 357-residue chain is Uroporphyrinogen decarboxylase (357 aa).

Residues 30–34 (RQAGR), aspartate 79, tyrosine 154, serine 209, and histidine 336 contribute to the substrate site.

Belongs to the uroporphyrinogen decarboxylase family. Homodimer.

The protein localises to the cytoplasm. It carries out the reaction uroporphyrinogen III + 4 H(+) = coproporphyrinogen III + 4 CO2. It participates in porphyrin-containing compound metabolism; protoporphyrin-IX biosynthesis; coproporphyrinogen-III from 5-aminolevulinate: step 4/4. Functionally, catalyzes the decarboxylation of four acetate groups of uroporphyrinogen-III to yield coproporphyrinogen-III. This Mycobacterium leprae (strain Br4923) protein is Uroporphyrinogen decarboxylase.